Here is a 656-residue protein sequence, read N- to C-terminus: MSAQVEQLEFQAEARQLLDLMVHSVYSNKDAFLRELISNASDALDKLRLEAFRNKDLDPRTVDTSDLHIEIEVDKNTRILTVRDNGIGMTRAEVVDLIGTLAKSGTAKLRQKLHAAKNLKDTAASEGLIGQFGIGFYSSFMVANKVELLTRKAGETAATRWSSDGEATYTIESVDEAPQGTSVTLHLKPEDFEDELHDYTSEWKIRELVKKYSDFIAWPIRMEVERRAPATSDGEGADGEEQVTIETQTINSMKALWTKSKDEVSEDEYKEFYKHIAHAWDDPLEVIAMKAEGTFEYQALLFIPSHAPFDLFNSDAKIGMQLYVKRVFIMSDCDQLMPMYLRFVKGVVDAEDMSLNVSREILQQNRQINAIRRRLTKKVLSAIKDLQAERPQDYRTFWTQFGKVLKEGLMSDSDNRDTLLHISSFASTHSDEEPTTLAQYVERMKDGQDQIFYATGESRQQVMNSPHLEAFKAKGYEVLLLTDPVDEVWVGMAPEFDGKPLKSVARGEVDLESEEEKTAHEAERKEQEQNFAGLVNWLKETLSDHVKEVRLSTRLTESPACLITDAFGITPALARIYRASGQDVPFGKRILELNPNHPLITGLQQAHENGGDDTHLRQLSETAELLYGTALLAEGGALENPAKFAGLLADLLSRSM.

The a; substrate-binding stretch occupies residues 1 to 359 (MSAQVEQLEF…AEDMSLNVSR (359 aa)). The segment at 360-575 (EILQQNRQIN…AFGITPALAR (216 aa)) is b. The c stretch occupies residues 576-656 (IYRASGQDVP…LLADLLSRSM (81 aa)).

Belongs to the heat shock protein 90 family. In terms of assembly, homodimer.

The protein localises to the cytoplasm. Molecular chaperone. Has ATPase activity. The protein is Chaperone protein HtpG of Mycobacterium leprae (strain TN).